The primary structure comprises 512 residues: Glutamyl-tRNA(Gln) amidotransferase subunit A (512 aa).

Active-site charge relay system residues include lysine 82 and serine 157. Serine 181 (acyl-ester intermediate) is an active-site residue.

The protein belongs to the amidase family. GatA subfamily. Heterotrimer of A, B and C subunits.

The catalysed reaction is L-glutamyl-tRNA(Gln) + L-glutamine + ATP + H2O = L-glutaminyl-tRNA(Gln) + L-glutamate + ADP + phosphate + H(+). Allows the formation of correctly charged Gln-tRNA(Gln) through the transamidation of misacylated Glu-tRNA(Gln) in organisms which lack glutaminyl-tRNA synthetase. The reaction takes place in the presence of glutamine and ATP through an activated gamma-phospho-Glu-tRNA(Gln). This chain is Glutamyl-tRNA(Gln) amidotransferase subunit A, found in Bordetella petrii (strain ATCC BAA-461 / DSM 12804 / CCUG 43448).